We begin with the raw amino-acid sequence, 336 residues long: Holliday junction branch migration complex subunit RuvB (336 aa).

The interval 4-184 is large ATPase domain (RuvB-L); the sequence is ADRLISAGAT…FGIVQRLEFY (181 aa). Residues Ile23, Arg24, Gly65, Lys68, Thr69, Thr70, 131–133, Arg174, Tyr184, and Arg221 each bind ATP; that span reads EDY. A Mg(2+)-binding site is contributed by Thr69. Positions 185–255 are small ATPAse domain (RuvB-S); it reads QVPDLQHIVG…IAAQALDMLN (71 aa). The segment at 258-336 is head domain (RuvB-H); sequence AEGFDYMDRK…HFGITPPEMP (79 aa). DNA is bound by residues Arg294, Arg313, and Arg318.

Belongs to the RuvB family. Homohexamer. Forms an RuvA(8)-RuvB(12)-Holliday junction (HJ) complex. HJ DNA is sandwiched between 2 RuvA tetramers; dsDNA enters through RuvA and exits via RuvB. An RuvB hexamer assembles on each DNA strand where it exits the tetramer. Each RuvB hexamer is contacted by two RuvA subunits (via domain III) on 2 adjacent RuvB subunits; this complex drives branch migration. In the full resolvosome a probable DNA-RuvA(4)-RuvB(12)-RuvC(2) complex forms which resolves the HJ.

The protein localises to the cytoplasm. The enzyme catalyses ATP + H2O = ADP + phosphate + H(+). The RuvA-RuvB-RuvC complex processes Holliday junction (HJ) DNA during genetic recombination and DNA repair, while the RuvA-RuvB complex plays an important role in the rescue of blocked DNA replication forks via replication fork reversal (RFR). RuvA specifically binds to HJ cruciform DNA, conferring on it an open structure. The RuvB hexamer acts as an ATP-dependent pump, pulling dsDNA into and through the RuvAB complex. RuvB forms 2 homohexamers on either side of HJ DNA bound by 1 or 2 RuvA tetramers; 4 subunits per hexamer contact DNA at a time. Coordinated motions by a converter formed by DNA-disengaged RuvB subunits stimulates ATP hydrolysis and nucleotide exchange. Immobilization of the converter enables RuvB to convert the ATP-contained energy into a lever motion, pulling 2 nucleotides of DNA out of the RuvA tetramer per ATP hydrolyzed, thus driving DNA branch migration. The RuvB motors rotate together with the DNA substrate, which together with the progressing nucleotide cycle form the mechanistic basis for DNA recombination by continuous HJ branch migration. Branch migration allows RuvC to scan DNA until it finds its consensus sequence, where it cleaves and resolves cruciform DNA. The polypeptide is Holliday junction branch migration complex subunit RuvB (Salmonella choleraesuis (strain SC-B67)).